We begin with the raw amino-acid sequence, 249 residues long: Phosphomannomutase 1 (249 aa).

The Nucleophile role is filled by Asp12. Residues Asp12 and Asp14 each coordinate Mg(2+). The active-site Proton donor/acceptor is Asp14. Arg21, Arg123, Arg134, Arg141, Ser179, and Asp181 together coordinate alpha-D-mannose 1-phosphate. Residues Asp209, Asp223, and Thr227 each contribute to the Mg(2+) site.

It belongs to the eukaryotic PMM family. As to quaternary structure, homodimer.

It localises to the cytoplasm. The enzyme catalyses alpha-D-mannose 1-phosphate = D-mannose 6-phosphate. The protein operates within nucleotide-sugar biosynthesis; GDP-alpha-D-mannose biosynthesis; alpha-D-mannose 1-phosphate from D-fructose 6-phosphate: step 2/2. Its function is as follows. Involved in the synthesis of the GDP-mannose and dolichol-phosphate-mannose required for a number of critical mannosyl transfer reactions. In Dictyostelium discoideum (Social amoeba), this protein is Phosphomannomutase 1 (pmmA).